We begin with the raw amino-acid sequence, 115 residues long: Dolichyl-diphosphooligosaccharide--protein glycosyltransferase subunit DAD2 (115 aa).

Residues 1–31 (MVKSTSKDAQDLFHSLHSAYTATPTNLKIID) are Cytoplasmic-facing. Residues 32–52 (LYVCFAVFTALIQVAYMALVG) traverse the membrane as a helical segment. The Lumenal segment spans residues 53–55 (SFP). Residues 56-76 (FNSFLSGVLSCIGTAVLAVCL) form a helical membrane-spanning segment. At 77 to 94 (RIQVNKENKEFKDLAPER) the chain is on the cytoplasmic side. A helical transmembrane segment spans residues 95–115 (AFADFVLCNLVLHLVIINFLG).

It belongs to the DAD/OST2 family. Component of the oligosaccharyltransferase (OST) complex.

The protein resides in the endoplasmic reticulum membrane. Its pathway is protein modification; protein glycosylation. Functionally, subunit of the oligosaccharyl transferase (OST) complex that catalyzes the initial transfer of a defined glycan (Glc(3)Man(9)GlcNAc(2) in eukaryotes) from the lipid carrier dolichol-pyrophosphate to an asparagine residue within an Asn-X-Ser/Thr consensus motif in nascent polypeptide chains, the first step in protein N-glycosylation. N-glycosylation occurs cotranslationally and the complex associates with the Sec61 complex at the channel-forming translocon complex that mediates protein translocation across the endoplasmic reticulum (ER). All subunits are required for a maximal enzyme activity. The sequence is that of Dolichyl-diphosphooligosaccharide--protein glycosyltransferase subunit DAD2 (DAD2) from Arabidopsis thaliana (Mouse-ear cress).